The chain runs to 434 residues: Alpha-enolase (434 aa).

An N-acetylserine modification is found at Ser2. Position 5 is an N6-acetyllysine (Lys5). Ser40 is a binding site for Mg(2+). Tyr44 bears the Phosphotyrosine mark. Lys60 carries the N6-acetyllysine; alternate modification. Residue Lys60 is modified to N6-succinyllysine; alternate. N6-acetyllysine is present on residues Lys64 and Lys71. The residue at position 89 (Lys89) is an N6-acetyllysine; alternate. Lys89 carries the N6-succinyllysine; alternate modification. Lys126 carries the post-translational modification N6-acetyllysine. Substrate is bound by residues His158 and Glu167. 2 positions are modified to N6-acetyllysine: Lys193 and Lys199. Lys202 carries the post-translational modification N6-acetyllysine; alternate. Residue Lys202 forms a Glycyl lysine isopeptide (Lys-Gly) (interchain with G-Cter in SUMO2); alternate linkage. Glu210 serves as the catalytic Proton donor. Lys228 and Lys233 each carry N6-acetyllysine; alternate. Lys228 is subject to N6-succinyllysine; alternate. N6-(2-hydroxyisobutyryl)lysine; alternate is present on Lys228. An N6-malonyllysine; alternate modification is found at Lys233. Asp245 provides a ligand contact to Mg(2+). Lys256 carries the N6-acetyllysine modification. Phosphoserine is present on Ser263. An N6-acetyllysine; alternate modification is found at Lys281. The residue at position 281 (Lys281) is an N6-(2-hydroxyisobutyryl)lysine; alternate. Position 285 is an N6-acetyllysine (Lys285). A Phosphotyrosine modification is found at Tyr287. Ser291 carries the post-translational modification Phosphoserine. Mg(2+) contacts are provided by Glu293 and Asp318. Substrate contacts are provided by Glu293 and Asp318. N6-acetyllysine is present on residues Lys335 and Lys343. Lys343 serves as the catalytic Proton acceptor. Substrate contacts are provided by residues 370-373 (SHRS) and Lys394. Residues 405-434 (AKYNQILRIEEELGSKAKFAGRSFRNPLAK) are required for interaction with PLG. Lys406 is modified (N6-acetyllysine). Lys420 carries the N6-acetyllysine; alternate modification. N6-succinyllysine; alternate is present on Lys420. N6-malonyllysine; alternate is present on Lys420.

Belongs to the enolase family. As to quaternary structure, mammalian enolase is composed of 3 isozyme subunits, alpha, beta and gamma, which can form homodimers or heterodimers which are cell-type and development-specific. ENO1 interacts with PLG in the neuronal plasma membrane and promotes its activation. The C-terminal lysine is required for this binding. Interacts with ENO4 and PGAM2. Interacts with CMTM6. It depends on Mg(2+) as a cofactor. In terms of processing, ISGylated. Post-translationally, lysine 2-hydroxyisobutyrylation (Khib) by p300/EP300 activates the phosphopyruvate hydratase activity. Expressed in flagella of epididymal sperm. The alpha/alpha homodimer is expressed in embryo and in most adult tissues. The alpha/beta heterodimer and the beta/beta homodimer are found in striated muscle, and the alpha/gamma heterodimer and the gamma/gamma homodimer in neurons.

The protein resides in the cytoplasm. It is found in the cell membrane. It carries out the reaction (2R)-2-phosphoglycerate = phosphoenolpyruvate + H2O. It participates in carbohydrate degradation; glycolysis; pyruvate from D-glyceraldehyde 3-phosphate: step 4/5. Its function is as follows. Glycolytic enzyme that catalyzes the conversion of 2-phosphoglycerate to phosphoenolpyruvate. In addition to glycolysis, involved in various processes such as growth control, hypoxia tolerance and allergic responses. May also function in the intravascular and pericellular fibrinolytic system due to its ability to serve as a receptor and activator of plasminogen on the cell surface of several cell-types such as leukocytes and neurons. Stimulates immunoglobulin production. The protein is Alpha-enolase (Eno1) of Rattus norvegicus (Rat).